The primary structure comprises 739 residues: Prestin (739 aa).

Residues 1–76 (MEHVTVSEEP…PILTWLPSYP (76 aa)) lie on the Cytoplasmic side of the membrane. The chain crosses the membrane as a helical span at residues 77 to 106 (LKEYLFGDIVSGISTGVMQLPQGLAYAMLA). At 107 to 109 (AVP) the chain is on the extracellular side. A helical membrane pass occupies residues 110–127 (PVFGLYSSFYPVLLYTFF). The Cytoplasmic segment spans residues 128 to 138 (GTSKHISIGTF). The chain crosses the membrane as a helical span at residues 139-152 (AVISLMIGGVAVRE). Over 153-169 (APDSMFMVNGTNSSLVV) the chain is Extracellular. N-linked (GlcNAc...) asparagine glycosylation is found at Asn-161 and Asn-164. The chain crosses the membrane as a helical span at residues 170–199 (NIEARDSRRVEVVVALTTLVGIIQFVLGLL). At 200–209 (RFGFLAIYLT) the chain is on the cytoplasmic side. The helical transmembrane segment at 210-233 (EPLVRGFTTAAAVHVSVSQLKYLL) threads the bilayer. Topologically, residues 234-244 (GVKTARFNGPL) are extracellular. Residues 245 to 256 (SVVYSLDAVLRN) constitute an intramembrane region (helical). Topologically, residues 257-261 (IADTN) are extracellular. The chain crosses the membrane as a helical span at residues 262–285 (IVTLIIGLGCTVFLYIIKQLNERF). Residues 286-294 (KKKLLIPIP) lie on the Cytoplasmic side of the membrane. Residues 295–310 (GEIIVVIVSTGISYGM) traverse the membrane as a helical segment. The Extracellular segment spans residues 311–335 (LMSENYGVDVVGKIPTGLLPPKVPD). Residues 336–370 (FSVFPNLFADAVPIAVVGFSITISLAKTFALKYGY) form a helical membrane-spanning segment. Topologically, residues 371–373 (SVD) are cytoplasmic. Residues 374–391 (GNQELIALGLCNFVSSFF) form a helical membrane-spanning segment. Topologically, residues 392-399 (HTFVVTAS) are extracellular. Residues 400–409 (MSRSLVQEST) traverse the membrane as a helical segment. A salicylate-binding site is contributed by Ser-401. Over 410-413 (GGHT) the chain is Cytoplasmic. A helical membrane pass occupies residues 414–435 (EIAGLLASLLVLLVVVAIGFVF). Over 436 to 439 (QPLP) the chain is Extracellular. Residues 440–467 (TTVLAAIIMVNLLGMFKQTRDIPVLWRK) traverse the membrane as a helical segment. A topological domain (cytoplasmic) is located at residue Ser-468. The chain crosses the membrane as a helical span at residues 469-484 (KIELAIWLVSFFASVL). At 485-486 (LG) the chain is on the extracellular side. Residues 487 to 507 (LDYGLAVAMAFAILTVIYRTQ) traverse the membrane as a helical segment. The tract at residues 508–731 (RPKNVVLGQI…AVLQCKRWRD (224 aa)) is extended region for STAS domain. Over 508 to 739 (RPKNVVLGQI…RDLPVHPNIH (232 aa)) the chain is Cytoplasmic. The region spanning 528-726 (EYEEAEECSG…PTIHDAVLQC (199 aa)) is the STAS domain.

This sequence belongs to the SLC26A/SulP transporter (TC 2.A.53) family. As to quaternary structure, homodimer. Interacts (via STAS domain) with CALM; this interaction is calcium-dependent. In terms of tissue distribution, expressed in hair cells of the auditory organs.

It is found in the cell membrane. It carries out the reaction oxalate(in) + chloride(out) = oxalate(out) + chloride(in). The catalysed reaction is sulfate(out) + chloride(in) = sulfate(in) + chloride(out). With respect to regulation, sulfate/chloride antiport activity is inhibited by salicylate; this inhibition is reversible. Electrogenic antiporter that exchanges sulfate or oxalate for chloride ion in a strictly coupled manner with a 1:1 stoichiometry. Adopts a dynamic conformation, which alternates between the exposure of the central binding site to the extra- and intracellular solutions leading to an inward-to-outward conformational transition during the transport cycle. Generates voltage-dependent charge movements resembling to the non-linear capacitance (NLC) of the cell membrane, but which are not associated to electromotile activity. The chain is Prestin from Danio rerio (Zebrafish).